A 539-amino-acid chain; its full sequence is Heparanase-like protein 2 (539 aa).

A signal peptide spans 1–21 (MGFNVVVFLSCLLLLPPVTFG). N-linked (GlcNAc...) asparagine glycans are attached at residues asparagine 143, asparagine 163, and asparagine 181. The active-site Proton donor is glutamate 198. Asparagine 300 carries an N-linked (GlcNAc...) asparagine glycan. Catalysis depends on glutamate 316, which acts as the Nucleophile. A glycan (N-linked (GlcNAc...) asparagine) is linked at asparagine 421.

The protein belongs to the glycosyl hydrolase 79 family.

Its subcellular location is the lysosome membrane. It is found in the secreted. Endoglycosidase which is a cell surface and extracellular matrix-degrading enzyme. Cleaves heparan sulfate proteoglycans (HSPGs) into heparan sulfate side chains and core proteoglycans. The polypeptide is Heparanase-like protein 2 (Arabidopsis thaliana (Mouse-ear cress)).